The chain runs to 107 residues: uncharacterized protein (107 aa).

Positions 1–18 are cleaved as a signal peptide; it reads MRTLMLIILSILIYLSSA.

This is an uncharacterized protein from Caenorhabditis elegans.